Consider the following 232-residue polypeptide: Rho-related GTP-binding protein Rho6 (232 aa).

GTP is bound by residues 23-28 (QCGKTA), 38-45 (YPETYVPT), 67-71 (DTSGS), 125-128 (CKTD), and 169-170 (AF). Residues 42-50 (YVPTVFENY) carry the Effector region motif. Cys229 carries the post-translational modification Cysteine methyl ester. A lipid anchor (S-geranylgeranyl cysteine) is attached at Cys229. Residues 230 to 232 (SIM) constitute a propeptide, removed in mature form.

This sequence belongs to the small GTPase superfamily. Rho family. In terms of assembly, binds GRB7 and PLXNB1. Interacts with PLXNA2. Interacts with UBXD5.

The protein localises to the cell membrane. Its subcellular location is the cytoplasm. It localises to the cytoskeleton. Lacks intrinsic GTPase activity. Has a low affinity for GDP, and constitutively binds GTP. Controls rearrangements of the actin cytoskeleton. Induces the Rac-dependent neuritic process formation in part by disruption of the cortical actin filaments. Causes the formation of many neuritic processes from the cell body with disruption of the cortical actin filaments. This is Rho-related GTP-binding protein Rho6 (RND1) from Bos taurus (Bovine).